A 281-amino-acid chain; its full sequence is Pantothenate synthetase (281 aa).

Residue 30–37 coordinates ATP; that stretch reads MGYLHEGH. The Proton donor role is filled by histidine 37. Glutamine 61 serves as a coordination point for (R)-pantoate. Glutamine 61 is a binding site for beta-alanine. Residue 147-150 participates in ATP binding; the sequence is GQKD. Position 153 (glutamine 153) interacts with (R)-pantoate. Residues valine 176 and 184 to 187 contribute to the ATP site; that span reads MSSR.

This sequence belongs to the pantothenate synthetase family. As to quaternary structure, homodimer.

The protein localises to the cytoplasm. The enzyme catalyses (R)-pantoate + beta-alanine + ATP = (R)-pantothenate + AMP + diphosphate + H(+). It participates in cofactor biosynthesis; (R)-pantothenate biosynthesis; (R)-pantothenate from (R)-pantoate and beta-alanine: step 1/1. Catalyzes the condensation of pantoate with beta-alanine in an ATP-dependent reaction via a pantoyl-adenylate intermediate. The sequence is that of Pantothenate synthetase from Caldicellulosiruptor saccharolyticus (strain ATCC 43494 / DSM 8903 / Tp8T 6331).